A 232-amino-acid polypeptide reads, in one-letter code: Ribonuclease P protein component 3 (232 aa).

It belongs to the eukaryotic/archaeal RNase P protein component 3 family. Consists of a catalytic RNA component and at least 4-5 protein subunits.

The protein localises to the cytoplasm. The enzyme catalyses Endonucleolytic cleavage of RNA, removing 5'-extranucleotides from tRNA precursor.. Its function is as follows. Part of ribonuclease P, a protein complex that generates mature tRNA molecules by cleaving their 5'-ends. This Halobacterium salinarum (strain ATCC 29341 / DSM 671 / R1) protein is Ribonuclease P protein component 3.